A 906-amino-acid polypeptide reads, in one-letter code: Protein translocase subunit SecA (906 aa).

ATP is bound by residues Gln86, 104–108 (GEGKT), and Asp499. A compositionally biased stretch (basic and acidic residues) spans 834 to 847 (KLQKNMRESREDPA). Positions 834–887 (KLQKNMRESREDPAFSKYNAGSSLETDLKPVVSRVDPKDRNPDDPTSWGRVSRN) are disordered. Zn(2+) is bound by residues Cys890, Cys892, Cys901, and His902.

It belongs to the SecA family. As to quaternary structure, monomer and homodimer. Part of the essential Sec protein translocation apparatus which comprises SecA, SecYEG and auxiliary proteins SecDF-YajC and YidC. Zn(2+) is required as a cofactor.

It is found in the cell inner membrane. The protein resides in the cytoplasm. The enzyme catalyses ATP + H2O + cellular proteinSide 1 = ADP + phosphate + cellular proteinSide 2.. Functionally, part of the Sec protein translocase complex. Interacts with the SecYEG preprotein conducting channel. Has a central role in coupling the hydrolysis of ATP to the transfer of proteins into and across the cell membrane, serving both as a receptor for the preprotein-SecB complex and as an ATP-driven molecular motor driving the stepwise translocation of polypeptide chains across the membrane. This chain is Protein translocase subunit SecA, found in Rickettsia felis (strain ATCC VR-1525 / URRWXCal2) (Rickettsia azadi).